The primary structure comprises 340 residues: Selenide, water dikinase (340 aa).

The active site involves selenocysteine 17. Selenocysteine 17 is a non-standard amino acid (selenocysteine). ATP-binding positions include lysine 20 and 45-47 (NNE). Aspartate 48 provides a ligand contact to Mg(2+). ATP is bound by residues aspartate 65, aspartate 88, and 136–138 (GHT). Aspartate 88 is a binding site for Mg(2+). Aspartate 224 is a Mg(2+) binding site.

This sequence belongs to the selenophosphate synthase 1 family. Class I subfamily. As to quaternary structure, homodimer. The cofactor is Mg(2+).

The enzyme catalyses hydrogenselenide + ATP + H2O = selenophosphate + AMP + phosphate + 2 H(+). Its function is as follows. Synthesizes selenophosphate from selenide and ATP. The polypeptide is Selenide, water dikinase (Campylobacter jejuni (strain RM1221)).